The chain runs to 244 residues: rRNA adenine N-6-methyltransferase (244 aa).

The S-adenosyl-L-methionine site is built by asparagine 11, isoleucine 13, glycine 38, glutamate 59, aspartate 84, and asparagine 101.

This sequence belongs to the class I-like SAM-binding methyltransferase superfamily. rRNA adenine N(6)-methyltransferase family.

It carries out the reaction adenosine(2085) in 23S rRNA + 2 S-adenosyl-L-methionine = N(6)-dimethyladenosine(2085) in 23S rRNA + 2 S-adenosyl-L-homocysteine + 2 H(+). Functionally, this protein produces a dimethylation of the adenine residue at position 2085 in 23S rRNA, resulting in reduced affinity between ribosomes and macrolide-lincosamide-streptogramin B antibiotics. This Staphylococcus aureus protein is rRNA adenine N-6-methyltransferase (ermC).